A 361-amino-acid polypeptide reads, in one-letter code: Ribosomal RNA large subunit methyltransferase M (361 aa).

S-adenosyl-L-methionine-binding positions include serine 187, 220–223 (CPGG), aspartate 239, aspartate 259, and aspartate 276. The active-site Proton acceptor is lysine 305.

The protein belongs to the class I-like SAM-binding methyltransferase superfamily. RNA methyltransferase RlmE family. RlmM subfamily. Monomer.

The protein resides in the cytoplasm. It carries out the reaction cytidine(2498) in 23S rRNA + S-adenosyl-L-methionine = 2'-O-methylcytidine(2498) in 23S rRNA + S-adenosyl-L-homocysteine + H(+). Catalyzes the 2'-O-methylation at nucleotide C2498 in 23S rRNA. This is Ribosomal RNA large subunit methyltransferase M from Shewanella sp. (strain W3-18-1).